Reading from the N-terminus, the 213-residue chain is uncharacterized protein (213 aa).

This is an uncharacterized protein from Acanthamoeba polyphaga (Amoeba).